Consider the following 375-residue polypeptide: Succinyl-diaminopimelate desuccinylase (375 aa).

H66 provides a ligand contact to Zn(2+). D68 is an active-site residue. D99 contacts Zn(2+). Residue E133 is the Proton acceptor of the active site. Residues E134, E162, and H348 each coordinate Zn(2+).

It belongs to the peptidase M20A family. DapE subfamily. In terms of assembly, homodimer. The cofactor is Zn(2+). Co(2+) is required as a cofactor.

The enzyme catalyses N-succinyl-(2S,6S)-2,6-diaminopimelate + H2O = (2S,6S)-2,6-diaminopimelate + succinate. It functions in the pathway amino-acid biosynthesis; L-lysine biosynthesis via DAP pathway; LL-2,6-diaminopimelate from (S)-tetrahydrodipicolinate (succinylase route): step 3/3. Functionally, catalyzes the hydrolysis of N-succinyl-L,L-diaminopimelic acid (SDAP), forming succinate and LL-2,6-diaminopimelate (DAP), an intermediate involved in the bacterial biosynthesis of lysine and meso-diaminopimelic acid, an essential component of bacterial cell walls. This is Succinyl-diaminopimelate desuccinylase from Shigella flexneri serotype 5b (strain 8401).